The primary structure comprises 249 residues: Zinc finger protein CG30 (249 aa).

An RING-type zinc finger spans residues 8 to 66 (CHICCSVGEIKNYFLQPVDAITILPIVELHTCRHQLCVMCVRKIAQRGRDKRVECPMCR).

This is Zinc finger protein CG30 (CG30) from Orgyia pseudotsugata (Douglas-fir tussock moth).